Reading from the N-terminus, the 132-residue chain is Large ribosomal subunit protein uL14 (132 aa).

Belongs to the universal ribosomal protein uL14 family. In terms of assembly, part of the 50S ribosomal subunit. Forms a cluster with proteins L3 and L24e, part of which may contact the 16S rRNA in 2 intersubunit bridges.

In terms of biological role, binds to 23S rRNA. Forms part of two intersubunit bridges in the 70S ribosome. This is Large ribosomal subunit protein uL14 from Methanococcus vannielii.